Consider the following 199-residue polypeptide: Holliday junction branch migration complex subunit RuvA (199 aa).

A domain I region spans residues Met1–Leu63. The tract at residues Thr64–Ile141 is domain II. Residues Ile141–Asn145 form a flexible linker region. Residues Ile146–Phe199 form a domain III region.

This sequence belongs to the RuvA family. In terms of assembly, homotetramer. Forms an RuvA(8)-RuvB(12)-Holliday junction (HJ) complex. HJ DNA is sandwiched between 2 RuvA tetramers; dsDNA enters through RuvA and exits via RuvB. An RuvB hexamer assembles on each DNA strand where it exits the tetramer. Each RuvB hexamer is contacted by two RuvA subunits (via domain III) on 2 adjacent RuvB subunits; this complex drives branch migration. In the full resolvosome a probable DNA-RuvA(4)-RuvB(12)-RuvC(2) complex forms which resolves the HJ.

It is found in the cytoplasm. Its function is as follows. The RuvA-RuvB-RuvC complex processes Holliday junction (HJ) DNA during genetic recombination and DNA repair, while the RuvA-RuvB complex plays an important role in the rescue of blocked DNA replication forks via replication fork reversal (RFR). RuvA specifically binds to HJ cruciform DNA, conferring on it an open structure. The RuvB hexamer acts as an ATP-dependent pump, pulling dsDNA into and through the RuvAB complex. HJ branch migration allows RuvC to scan DNA until it finds its consensus sequence, where it cleaves and resolves the cruciform DNA. This chain is Holliday junction branch migration complex subunit RuvA, found in Rickettsia prowazekii (strain Madrid E).